Reading from the N-terminus, the 780-residue chain is Copper-exporting P-type ATPase (780 aa).

Residues 2 to 67 (QRIQLNITGM…AVRRAALCTD (66 aa)) enclose the HMA domain. Cysteine 13 and cysteine 16 together coordinate Cu(+). The next 6 helical transmembrane spans lie at 89–109 (LAVA…FAVL), 114–134 (FPGW…WAAW), 153–173 (TLIS…VFGH), 185–205 (ALLG…VFVL), 348–368 (VFVP…LIAG), and 374–394 (VFSA…GLAT). The active-site 4-aspartylphosphate intermediate is the aspartate 430. Helical transmembrane passes span 680 to 698 (FNMV…IAAA) and 704 to 722 (LVAG…SNSL).

The protein belongs to the cation transport ATPase (P-type) (TC 3.A.3) family. Type IB subfamily.

Its subcellular location is the cell membrane. It catalyses the reaction Cu(+)(in) + ATP + H2O = Cu(+)(out) + ADP + phosphate + H(+). Functionally, involved in copper export. The chain is Copper-exporting P-type ATPase (ctpA) from Mycobacterium leprae (strain TN).